A 173-amino-acid chain; its full sequence is Archaemetzincin (173 aa).

His130 contacts Zn(2+). The active-site Proton acceptor is Glu131. Zn(2+)-binding residues include His134, His140, Cys141, Cys146, Cys165, and Cys168.

The protein belongs to the peptidase M54 family. In terms of assembly, monomer. It depends on Zn(2+) as a cofactor.

Its function is as follows. Probable zinc metalloprotease whose natural substrate is unknown. This is Archaemetzincin from Haloarcula marismortui (strain ATCC 43049 / DSM 3752 / JCM 8966 / VKM B-1809) (Halobacterium marismortui).